We begin with the raw amino-acid sequence, 905 residues long: DNA gyrase subunit A (905 aa).

The 490-residue stretch at 35–524 (IPDVRDGLKP…GEFDQDIEDL (490 aa)) folds into the Topo IIA-type catalytic domain. Tyrosine 123 serves as the catalytic O-(5'-phospho-DNA)-tyrosine intermediate. The GyrA-box motif lies at 551–557 (QKRGGKG).

It belongs to the type II topoisomerase GyrA/ParC subunit family. As to quaternary structure, heterotetramer, composed of two GyrA and two GyrB chains. In the heterotetramer, GyrA contains the active site tyrosine that forms a transient covalent intermediate with DNA, while GyrB binds cofactors and catalyzes ATP hydrolysis.

The protein localises to the cytoplasm. It carries out the reaction ATP-dependent breakage, passage and rejoining of double-stranded DNA.. In terms of biological role, a type II topoisomerase that negatively supercoils closed circular double-stranded (ds) DNA in an ATP-dependent manner to modulate DNA topology and maintain chromosomes in an underwound state. Negative supercoiling favors strand separation, and DNA replication, transcription, recombination and repair, all of which involve strand separation. Also able to catalyze the interconversion of other topological isomers of dsDNA rings, including catenanes and knotted rings. Type II topoisomerases break and join 2 DNA strands simultaneously in an ATP-dependent manner. This Rickettsia prowazekii (strain Madrid E) protein is DNA gyrase subunit A.